We begin with the raw amino-acid sequence, 36 residues long: Potassium channel toxin alpha-KTx 1.9 (36 aa).

The protein belongs to the short scorpion toxin superfamily. Potassium channel inhibitor family. Alpha-KTx 01 subfamily. In terms of tissue distribution, expressed by the venom gland.

The protein localises to the secreted. Its function is as follows. Potent selective inhibitor of Kv1/KCNA voltage-gated potassium channels. This is Potassium channel toxin alpha-KTx 1.9 from Centruroides limbatus (Bark scorpion).